A 514-amino-acid polypeptide reads, in one-letter code: Beta-secretase 2 (514 aa).

An N-terminal signal peptide occupies residues 1-19; that stretch reads MGALLRALLLLVLAQWLLS. A propeptide spanning residues 20–62 is cleaved from the precursor; it reads AVPALAPAPFTLPLQVAGATNHRASAVPGLGTPELPRADGLAL. Residues 20 to 469 are Extracellular-facing; that stretch reads AVPALAPAPF…NEPILWIVSY (450 aa). Residues 88 to 425 form the Peptidase A1 domain; it reads YYLEMLIGTP…DRAQRRVGFA (338 aa). D106 is a catalytic residue. N166 carries an N-linked (GlcNAc...) asparagine glycan. 3 disulfides stabilise this stretch: C229–C429, C288–C453, and C340–C389. D299 is an active-site residue. The N-linked (GlcNAc...) asparagine glycan is linked to N362. The helical transmembrane segment at 470-490 threads the bilayer; the sequence is ALMSVCGAILLVLILLLLLPL. Over 491-514 the chain is Cytoplasmic; that stretch reads HCRHAPRDPEVVNDESSLVRHRWK.

Belongs to the peptidase A1 family. As to quaternary structure, monomer. Interacts with RTN3 and RTN4. In terms of processing, undergoes autoproteolytic cleavage. Glycosylated. High expression in pancreatic islets. Expressed at much lower levels in the pituitary, colon, and ovaries and is nearly absent from all the other tissues.

The protein resides in the cell membrane. It is found in the golgi apparatus. The protein localises to the endoplasmic reticulum. It localises to the endosome. Its subcellular location is the melanosome. The enzyme catalyses Broad endopeptidase specificity. Cleaves Glu-Val-Asn-Leu-|-Asp-Ala-Glu-Phe in the Swedish variant of Alzheimer's amyloid precursor protein.. Its function is as follows. Responsible for the proteolytic processing of the amyloid precursor protein (APP). Cleaves APP, between residues 690 and 691, leading to the generation and extracellular release of beta-cleaved soluble APP, and a corresponding cell-associated C-terminal fragment which is later released by gamma-secretase. It has also been shown that it can cleave APP between residues 671 and 672. Involved in the proteolytic shedding of PMEL at early stages of melanosome biogenesis. Cleaves PMEL within the M-beta fragment to release the amyloidogenic PMEL luminal fragment containing M-alpha and a small portion of M-beta N-terminus. This is a prerequisite step for subsequent processing and assembly of PMEL fibrils into amyloid sheets. Responsible also for the proteolytic processing of CLTRN in pancreatic beta cells. The chain is Beta-secretase 2 (Bace2) from Mus musculus (Mouse).